Reading from the N-terminus, the 144-residue chain is Large ribosomal subunit protein uL16 (144 aa).

A compositionally biased stretch (basic residues) spans 1–19; that stretch reads MLLPKRVKYRRQHRPKTTG. The tract at residues 1 to 23 is disordered; the sequence is MLLPKRVKYRRQHRPKTTGRSKG.

This sequence belongs to the universal ribosomal protein uL16 family. Part of the 50S ribosomal subunit.

Functionally, binds 23S rRNA and is also seen to make contacts with the A and possibly P site tRNAs. The polypeptide is Large ribosomal subunit protein uL16 (Staphylococcus epidermidis (strain ATCC 35984 / DSM 28319 / BCRC 17069 / CCUG 31568 / BM 3577 / RP62A)).